A 169-amino-acid chain; its full sequence is Cilia- and flagella-associated protein 68 (169 aa).

Mn stretches follow at residues 98–109 and 139–149; these read TTYDTSYNNRRP and KSTYMTSYSKP.

This sequence belongs to the CFAP68 family. As to quaternary structure, microtubule inner protein component of sperm flagellar doublet microtubules.

The protein localises to the cytoplasm. The protein resides in the cytoskeleton. Its subcellular location is the cilium axoneme. It is found in the flagellum axoneme. It localises to the nucleus. The protein localises to the cell projection. The protein resides in the cilium. Its function is as follows. Microtubule inner protein (MIP) part of the dynein-decorated doublet microtubules (DMTs) in cilia axoneme, which is required for motile cilia beating. The sequence is that of Cilia- and flagella-associated protein 68 (CFAP68) from Bos taurus (Bovine).